Consider the following 174-residue polypeptide: Histone deacetylase complex subunit SAP30 homolog (174 aa).

Residues 22–70 (CCLLDDGERCRKQAGNASYSKRIQKTVTQRRLKLSIDSHARHIYICDFH) form an Atypical zinc finger.

The protein belongs to the SAP30 family. As to quaternary structure, component of the class 1 Sin3-histone deacetylase complex (HDAC).

The protein localises to the nucleus. Its function is as follows. Required for the function of the class 1 Sin3-histone deacetylase complex (HDAC). In Anopheles gambiae (African malaria mosquito), this protein is Histone deacetylase complex subunit SAP30 homolog.